Here is a 126-residue protein sequence, read N- to C-terminus: Histone H2B type 1-M (126 aa).

Positions M1–E36 are disordered. P2 is modified (N-acetylproline). E3 is subject to ADP-ribosyl glutamic acid. Position 6 is an N6-(2-hydroxyisobutyryl)lysine; alternate (K6). Residue K6 is modified to N6-(beta-hydroxybutyryl)lysine; alternate. K6 is subject to N6-acetyllysine; alternate. K6 carries the post-translational modification N6-butyryllysine; alternate. K6 carries the post-translational modification N6-crotonyllysine; alternate. K6 is modified (N6-lactoyllysine; alternate). K6 participates in a covalent cross-link: Glycyl lysine isopeptide (Lys-Gly) (interchain with G-Cter in SUMO2); alternate. S7 carries the post-translational modification ADP-ribosylserine. An N6-(beta-hydroxybutyryl)lysine; alternate modification is found at K12. An N6-acetyllysine; alternate mark is found at K12 and K13. N6-crotonyllysine; alternate occurs at positions 12 and 13. An N6-lactoyllysine; alternate modification is found at K12. The residue at position 13 (K13) is an N6-(2-hydroxyisobutyryl)lysine; alternate. A Phosphoserine; by STK4/MST1 modification is found at S15. Residues K16, K17, K21, and K24 each carry the N6-acetyllysine; alternate modification. N6-crotonyllysine; alternate is present on residues K16, K17, K21, and K24. K16, K17, K21, and K24 each carry N6-lactoyllysine; alternate. K17 and K21 each carry N6-(beta-hydroxybutyryl)lysine; alternate. K17 bears the N6-glutaryllysine; alternate mark. Residues K21 and K24 each carry the N6-(2-hydroxyisobutyryl)lysine; alternate modification. K21 is subject to N6-butyryllysine; alternate. K21 is covalently cross-linked (Glycyl lysine isopeptide (Lys-Gly) (interchain with G-Cter in SUMO2); alternate). N6-(2-hydroxyisobutyryl)lysine is present on K25. N6-(2-hydroxyisobutyryl)lysine; alternate is present on K35. At K35 the chain carries N6-(beta-hydroxybutyryl)lysine; alternate. The residue at position 35 (K35) is an N6-crotonyllysine; alternate. K35 is modified (N6-glutaryllysine; alternate). K35 bears the N6-succinyllysine; alternate mark. Residue K35 forms a Glycyl lysine isopeptide (Lys-Gly) (interchain with G-Cter in ubiquitin); alternate linkage. Residue E36 is modified to PolyADP-ribosyl glutamic acid. S37 is modified (phosphoserine; by AMPK). K44, K47, and K58 each carry N6-(2-hydroxyisobutyryl)lysine; alternate. Residue K44 is modified to N6-lactoyllysine; alternate. K44 and K47 each carry N6-glutaryllysine; alternate. Position 47 is an N6-methyllysine; alternate (K47). K58 carries the post-translational modification N6,N6-dimethyllysine; alternate. R80 is subject to Dimethylated arginine. Residue K86 is modified to N6-(2-hydroxyisobutyryl)lysine; alternate. K86 carries the N6-(beta-hydroxybutyryl)lysine; alternate modification. K86 is subject to N6-acetyllysine; alternate. The residue at position 86 (K86) is an N6-lactoyllysine; alternate. K86 carries the N6,N6,N6-trimethyllysine; alternate modification. 2 positions are modified to omega-N-methylarginine: R87 and R93. K109 bears the N6-(2-hydroxyisobutyryl)lysine; alternate mark. K109 is modified (N6-lactoyllysine; alternate). N6-glutaryllysine; alternate is present on K109. At K109 the chain carries N6-methyllysine; alternate. O-linked (GlcNAc) serine glycosylation is present at S113. T116 carries the phosphothreonine modification. 2 positions are modified to N6-(2-hydroxyisobutyryl)lysine; alternate: K117 and K121. K117 and K121 each carry N6-(beta-hydroxybutyryl)lysine; alternate. Residues K117 and K121 each carry the N6-lactoyllysine; alternate modification. 2 positions are modified to N6-glutaryllysine; alternate: K117 and K121. N6-succinyllysine; alternate occurs at positions 117 and 121. Position 117 is an N6-malonyllysine; alternate (K117). Position 117 is an N6-methylated lysine; alternate (K117). Residue K121 forms a Glycyl lysine isopeptide (Lys-Gly) (interchain with G-Cter in ubiquitin); alternate linkage.

It belongs to the histone H2B family. As to quaternary structure, the nucleosome is a histone octamer containing two molecules each of H2A, H2B, H3 and H4 assembled in one H3-H4 heterotetramer and two H2A-H2B heterodimers. The octamer wraps approximately 147 bp of DNA. Post-translationally, monoubiquitination at Lys-35 (H2BK34Ub) by the MSL1/MSL2 dimer is required for histone H3 'Lys-4' (H3K4me) and 'Lys-79' (H3K79me) methylation and transcription activation at specific gene loci, such as HOXA9 and MEIS1 loci. Similarly, monoubiquitination at Lys-121 (H2BK120Ub) by the RNF20/40 complex gives a specific tag for epigenetic transcriptional activation and is also prerequisite for histone H3 'Lys-4' and 'Lys-79' methylation. It also functions cooperatively with the FACT dimer to stimulate elongation by RNA polymerase II. H2BK120Ub also acts as a regulator of mRNA splicing: deubiquitination by USP49 is required for efficient cotranscriptional splicing of a large set of exons. Phosphorylation at Ser-37 (H2BS36ph) by AMPK in response to stress promotes transcription. Phosphorylated on Ser-15 (H2BS14ph) by STK4/MST1 during apoptosis; which facilitates apoptotic chromatin condensation. Also phosphorylated on Ser-15 in response to DNA double strand breaks (DSBs), and in correlation with somatic hypermutation and immunoglobulin class-switch recombination. In terms of processing, glcNAcylation at Ser-113 promotes monoubiquitination of Lys-121. It fluctuates in response to extracellular glucose, and associates with transcribed genes. Post-translationally, ADP-ribosylated by PARP1 or PARP2 on Ser-7 (H2BS6ADPr) in response to DNA damage. H2BS6ADPr promotes recruitment of CHD1L. Mono-ADP-ribosylated on Glu-3 (H2BE2ADPr) by PARP3 in response to single-strand breaks. Poly ADP-ribosylation on Glu-36 (H2BE35ADPr) by PARP1 regulates adipogenesis: it inhibits phosphorylation at Ser-37 (H2BS36ph), thereby blocking expression of pro-adipogenetic genes. Crotonylation (Kcr) is specifically present in male germ cells and marks testis-specific genes in post-meiotic cells, including X-linked genes that escape sex chromosome inactivation in haploid cells. Crotonylation marks active promoters and enhancers and confers resistance to transcriptional repressors. It is also associated with post-meiotically activated genes on autosomes. In terms of processing, lactylated in macrophages by EP300/P300 by using lactoyl-CoA directly derived from endogenous or exogenous lactate, leading to stimulates gene transcription.

It is found in the nucleus. The protein localises to the chromosome. Core component of nucleosome. Nucleosomes wrap and compact DNA into chromatin, limiting DNA accessibility to the cellular machineries which require DNA as a template. Histones thereby play a central role in transcription regulation, DNA repair, DNA replication and chromosomal stability. DNA accessibility is regulated via a complex set of post-translational modifications of histones, also called histone code, and nucleosome remodeling. The polypeptide is Histone H2B type 1-M (Homo sapiens (Human)).